Consider the following 981-residue polypeptide: Anoctamin-3 (981 aa).

The segment covering methionine 1–alanine 28 has biased composition (polar residues). Disordered stretches follow at residues methionine 1–proline 32 and proline 67–arginine 87. At methionine 1–threonine 403 the chain is on the cytoplasmic side. Residues aspartate 76–arginine 87 are compositionally biased toward basic and acidic residues. The chain crosses the membrane as a helical span at residues glycine 404–methionine 424. 3 N-linked (GlcNAc...) asparagine glycosylation sites follow: asparagine 425, asparagine 448, and asparagine 455. Residues asparagine 425–asparagine 469 are Extracellular-facing. A helical transmembrane segment spans residues glycine 470 to tryptophan 490. Over lysine 491–serine 550 the chain is Cytoplasmic. A helical transmembrane segment spans residues valine 551–tyrosine 571. Topologically, residues arginine 572–glutamine 592 are extracellular. Residues phenylalanine 593–alanine 613 form a helical membrane-spanning segment. Topologically, residues tyrosine 614 to lysine 640 are cytoplasmic. The helical transmembrane segment at methionine 641–glycine 661 threads the bilayer. At arginine 662–glutamine 761 the chain is on the extracellular side. A helical membrane pass occupies residues phenylalanine 762–asparagine 782. Over asparagine 783–glycine 810 the chain is Cytoplasmic. The helical transmembrane segment at isoleucine 811–isoleucine 831 threads the bilayer. Residues alanine 832 to leucine 914 lie on the Extracellular side of the membrane. Asparagine 866 carries an N-linked (GlcNAc...) asparagine glycan. Residues alanine 915–isoleucine 935 form a helical membrane-spanning segment. Over proline 936–proline 981 the chain is Cytoplasmic.

The protein belongs to the anoctamin family. In terms of assembly, interacts with KCNT1/Slack. As to expression, predominantly expressed in neuronal tissues. Expressed in brain.

It is found in the cell membrane. The catalysed reaction is a 1,2-diacyl-sn-glycero-3-phosphocholine(in) = a 1,2-diacyl-sn-glycero-3-phosphocholine(out). It catalyses the reaction a beta-D-galactosyl-(1&lt;-&gt;1')-N-acylsphing-4-enine(out) = a beta-D-galactosyl-(1&lt;-&gt;1')-N-acylsphing-4-enine(in). In terms of biological role, has calcium-dependent phospholipid scramblase activity; scrambles phosphatidylcholine and galactosylceramide. Does not exhibit calcium-activated chloride channel (CaCC) activity. Seems to act as potassium channel regulator and may inhibit pain signaling; can facilitate KCNT1/Slack channel activity by promoting its full single-channel conductance at very low sodium concentrations and by increasing its sodium sensitivity. The sequence is that of Anoctamin-3 from Mus musculus (Mouse).